The sequence spans 298 residues: Probable prolyl 4-hydroxylase 4 (298 aa).

Topologically, residues 1-6 (MARRGL) are cytoplasmic. A helical; Signal-anchor for type II membrane protein membrane pass occupies residues 7–25 (LISFFAIFSVLLQSSTSLI). At 26 to 298 (SSSSVFVNPS…GYCRRSCKAC (273 aa)) the chain is on the lumenal side. N-linked (GlcNAc...) asparagine glycosylation occurs at Asn-77. In terms of domain architecture, Fe2OG dioxygenase spans 120–245 (NGEDIQVLRY…KWSATKWIHV (126 aa)). 2 residues coordinate Fe cation: His-138 and Asp-140. Asn-164 carries an N-linked (GlcNAc...) asparagine glycan. His-226 lines the Fe cation pocket. Lys-236 contacts 2-oxoglutarate. Asn-257 and Asn-262 each carry an N-linked (GlcNAc...) asparagine glycan. Residues 258-298 (CTDMNESCERWAVLGECTKNPEYMVGTTELPGYCRRSCKAC) form the ShKT domain. Intrachain disulfides connect Cys-258-Cys-298, Cys-265-Cys-291, and Cys-274-Cys-295.

It belongs to the P4HA family. Fe(2+) is required as a cofactor. L-ascorbate serves as cofactor.

The protein resides in the endoplasmic reticulum membrane. The catalysed reaction is L-prolyl-[collagen] + 2-oxoglutarate + O2 = trans-4-hydroxy-L-prolyl-[collagen] + succinate + CO2. Its function is as follows. Catalyzes the post-translational formation of 4-hydroxyproline in -Xaa-Pro-Gly- sequences in proline-rich peptide sequences of plant glycoproteins and other proteins. Hydroxyprolines are important constituent of many plant cell wall glycoproteins such as extensins, hydroxyproline-rich glycoproteins, lectins and arabinogalactan proteins. This is Probable prolyl 4-hydroxylase 4 from Arabidopsis thaliana (Mouse-ear cress).